We begin with the raw amino-acid sequence, 546 residues long: Cytokine-like nuclear factor N-PAC (546 aa).

The 59-residue stretch at 8 to 66 (LGDLVWGKLGRYPPWPGKIVNPPKDLKKPRGKKCFFVKFFGTEDHAWIKVEQLKPYHAH) folds into the PWWP domain. Basic and acidic residues-rich tracts occupy residues 91-145 (RRAK…EGKK) and 161-181 (RAQE…KDLT). The interval 91–187 (RRAKGKDQTS…KDLTIPESST (97 aa)) is disordered. A Phosphoserine modification is found at Ser130. Residue Lys135 forms a Glycyl lysine isopeptide (Lys-Gly) (interchain with G-Cter in SUMO2) linkage. Phosphoserine is present on Ser166. The segment at residues 167–179 (PRKRGRPPKDEKD) is a DNA-binding region (a.T hook). Glycyl lysine isopeptide (Lys-Gly) (interchain with G-Cter in SUMO2) cross-links involve residues Lys175, Lys178, Lys200, and Lys210. Residues 213-216 (DPHF) form an interaction with histone H3 region. An interaction with KDM1B region spans residues 215–224 (HFHHFLLSQT). Residues Lys226, Lys236, Lys239, and Lys268 each participate in a glycyl lysine isopeptide (Lys-Gly) (interchain with G-Cter in SUMO2) cross-link. The tract at residues 260–546 (GSITPTDKKI…MSAVYRAYIH (287 aa)) is dehydrogenase domain. 270-284 (GFLGLGLMGSGIVSN) lines the NAD(+) pocket. A Glycyl lysine isopeptide (Lys-Gly) (interchain with G-Cter in SUMO2) cross-link involves residue Lys301. Positions 355 and 498 each coordinate NAD(+). Ser533 bears the Phosphoserine mark.

It belongs to the HIBADH-related family. NP60 subfamily. In terms of assembly, homotetramere. Interacts with MAPK14. Interacts with KDM1B at nucleosomes; this interaction stimulates H3K4me1 and H3K4me2 demethylation. Binds to mononucleosomes. Interacts with GATA4; the interaction is required for a synergistic activation of GATA4 target genes transcription.

It is found in the nucleus. The protein localises to the chromosome. Cytokine-like nuclear factor with chromatin gene reader activity involved in chromatin modification and regulation of gene expression. Acts as a nucleosome-destabilizing factor that is recruited to genes during transcriptional activation. Recognizes and binds histone H3 without a preference for specific epigenetic markers and also binds DNA. Interacts with KDM1B and promotes its histone demethylase activity by facilitating the capture of H3 tails, they form a multifunctional enzyme complex that modifies transcribed chromatin and facilitates Pol II transcription through nucleosomes. Stimulates the acetylation of 'Lys-56' of nucleosomal histone H3 (H3K56ac) by EP300. With GATA4, co-binds a defined set of heart development genes and coregulates their expression during cardiomyocyte differentiation. Regulates p38 MAP kinase activity by mediating stress activation of MAPK14/p38alpha and specifically regulating MAPK14 signaling. Indirectly promotes phosphorylation of MAPK14 and activation of ATF2. The phosphorylation of MAPK14 requires upstream activity of MAP2K4 and MAP2K6. The protein is Cytokine-like nuclear factor N-PAC of Mus musculus (Mouse).